The chain runs to 75 residues: MARYFRRRKFCRFTAENVVEIDYKDIATLKNYITESGKIVPSRITGTRAKYQRQLARAIKRARYLALLPYTDNHQ.

Belongs to the bacterial ribosomal protein bS18 family. Part of the 30S ribosomal subunit. Forms a tight heterodimer with protein bS6.

Functionally, binds as a heterodimer with protein bS6 to the central domain of the 16S rRNA, where it helps stabilize the platform of the 30S subunit. This Histophilus somni (strain 129Pt) (Haemophilus somnus) protein is Small ribosomal subunit protein bS18.